The primary structure comprises 183 residues: Threonylcarbamoyl-AMP synthase (183 aa).

One can recognise a YrdC-like domain in the interval 1–183 (MNITQIIEKL…LFTNQLVRQG (183 aa)).

This sequence belongs to the SUA5 family. TsaC subfamily.

It is found in the cytoplasm. It catalyses the reaction L-threonine + hydrogencarbonate + ATP = L-threonylcarbamoyladenylate + diphosphate + H2O. Functionally, required for the formation of a threonylcarbamoyl group on adenosine at position 37 (t(6)A37) in tRNAs that read codons beginning with adenine. Catalyzes the conversion of L-threonine, HCO(3)(-)/CO(2) and ATP to give threonylcarbamoyl-AMP (TC-AMP) as the acyladenylate intermediate, with the release of diphosphate. The chain is Threonylcarbamoyl-AMP synthase from Histophilus somni (strain 129Pt) (Haemophilus somnus).